Here is a 141-residue protein sequence, read N- to C-terminus: ATP synthase epsilon chain (141 aa).

The protein belongs to the ATPase epsilon chain family. As to quaternary structure, F-type ATPases have 2 components, CF(1) - the catalytic core - and CF(0) - the membrane proton channel. CF(1) has five subunits: alpha(3), beta(3), gamma(1), delta(1), epsilon(1). CF(0) has three main subunits: a, b and c.

It localises to the cell membrane. In terms of biological role, produces ATP from ADP in the presence of a proton gradient across the membrane. The chain is ATP synthase epsilon chain from Lactococcus lactis subsp. cremoris (strain SK11).